Here is a 146-residue protein sequence, read N- to C-terminus: Large-conductance mechanosensitive channel (146 aa).

The next 2 helical transmembrane spans lie at 12–32 and 83–103; these read AFAM…GGAF and GNFL…FLFI.

This sequence belongs to the MscL family. In terms of assembly, homopentamer.

It is found in the cell inner membrane. Its function is as follows. Channel that opens in response to stretch forces in the membrane lipid bilayer. May participate in the regulation of osmotic pressure changes within the cell. The polypeptide is Large-conductance mechanosensitive channel (Phocaeicola vulgatus (strain ATCC 8482 / DSM 1447 / JCM 5826 / CCUG 4940 / NBRC 14291 / NCTC 11154) (Bacteroides vulgatus)).